The sequence spans 396 residues: Elongation factor Tu (396 aa).

The 197-residue stretch at 10 to 206 (KAHVNIGTIG…AVDEYIPDPV (197 aa)) folds into the tr-type G domain. Residues 19-26 (GHVDHGKT) form a G1 region. Position 19 to 26 (19 to 26 (GHVDHGKT)) interacts with GTP. T26 lines the Mg(2+) pocket. A G2 region spans residues 62–66 (GITIN). The tract at residues 83-86 (DAPG) is G3. GTP contacts are provided by residues 83–87 (DAPGH) and 138–141 (NKSD). The tract at residues 138–141 (NKSD) is G4. A G5 region spans residues 176–178 (SAL).

This sequence belongs to the TRAFAC class translation factor GTPase superfamily. Classic translation factor GTPase family. EF-Tu/EF-1A subfamily. As to quaternary structure, monomer.

It is found in the cytoplasm. It catalyses the reaction GTP + H2O = GDP + phosphate + H(+). Its function is as follows. GTP hydrolase that promotes the GTP-dependent binding of aminoacyl-tRNA to the A-site of ribosomes during protein biosynthesis. The sequence is that of Elongation factor Tu from Micrococcus luteus (Micrococcus lysodeikticus).